The sequence spans 94 residues: Co-chaperonin GroES (94 aa).

Belongs to the GroES chaperonin family. In terms of assembly, heptamer of 7 subunits arranged in a ring. Interacts with the chaperonin GroEL.

Its subcellular location is the cytoplasm. In terms of biological role, together with the chaperonin GroEL, plays an essential role in assisting protein folding. The GroEL-GroES system forms a nano-cage that allows encapsulation of the non-native substrate proteins and provides a physical environment optimized to promote and accelerate protein folding. GroES binds to the apical surface of the GroEL ring, thereby capping the opening of the GroEL channel. The chain is Co-chaperonin GroES from Lactobacillus delbrueckii subsp. bulgaricus (strain ATCC BAA-365 / Lb-18).